The primary structure comprises 104 residues: Small ribosomal subunit protein uS10 (104 aa).

It belongs to the universal ribosomal protein uS10 family. Part of the 30S ribosomal subunit.

Involved in the binding of tRNA to the ribosomes. The sequence is that of Small ribosomal subunit protein uS10 from Helicobacter pylori (strain J99 / ATCC 700824) (Campylobacter pylori J99).